The primary structure comprises 449 residues: Tripartite motif-containing protein 64 (449 aa).

Residues 15–56 form an RING-type zinc finger; the sequence is CCICVNYFIDPVTIDCGHSFCRPCLCLCSEEGRAPMRCPSCR. The B box-type zinc finger occupies 87-128; that stretch reads SSDNICVLHEETKELFCEADKRLLCGPCSESPEHMAHSHSPI. Zn(2+) is bound by residues Cys92, His95, Cys114, and His120. The stretch at 189 to 225 forms a coiled coil; sequence LDEEEQRHLQALEREAEELFQQLQDSQVRMTQHLERM. Residues 269 to 449 form the B30.2/SPRY domain; sequence LTSWCITGVL…LRPFFCFGCT (181 aa).

This sequence belongs to the TRIM/RBCC family.

This is Tripartite motif-containing protein 64 (TRIM64) from Homo sapiens (Human).